A 615-amino-acid polypeptide reads, in one-letter code: Probable methylmalonyl-CoA mutase small subunit (615 aa).

This sequence belongs to the methylmalonyl-CoA mutase family. In terms of assembly, heterodimer of an alpha and a beta chain. Adenosylcob(III)alamin serves as cofactor.

The enzyme catalyses (R)-methylmalonyl-CoA = succinyl-CoA. It functions in the pathway metabolic intermediate metabolism; propanoyl-CoA degradation; succinyl-CoA from propanoyl-CoA: step 3/3. Catalyzes the isomerization of succinyl-CoA to methylmalonyl-CoA during synthesis of propionate from tricarboxylic acid-cycle intermediates. The sequence is that of Probable methylmalonyl-CoA mutase small subunit (mutA) from Mycobacterium bovis (strain ATCC BAA-935 / AF2122/97).